Reading from the N-terminus, the 271-residue chain is Phosphatidate cytidylyltransferase (271 aa).

Helical transmembrane passes span 12 to 32, 53 to 73, 75 to 95, 111 to 131, 136 to 156, 174 to 194, 199 to 219, and 251 to 271; these read LLPI…ALFI, FGRV…YHLP, LAGA…VLVL, LGMG…LKQW, GLII…YFSG, WEGV…VGLY, LGAL…SIVG, and SLTA…WGAP.

Belongs to the CDS family.

It is found in the cell inner membrane. It carries out the reaction a 1,2-diacyl-sn-glycero-3-phosphate + CTP + H(+) = a CDP-1,2-diacyl-sn-glycerol + diphosphate. Its pathway is phospholipid metabolism; CDP-diacylglycerol biosynthesis; CDP-diacylglycerol from sn-glycerol 3-phosphate: step 3/3. The sequence is that of Phosphatidate cytidylyltransferase (cdsA) from Pseudomonas aeruginosa (strain ATCC 15692 / DSM 22644 / CIP 104116 / JCM 14847 / LMG 12228 / 1C / PRS 101 / PAO1).